The sequence spans 470 residues: Ribulose bisphosphate carboxylase large chain (470 aa).

Position 5 is an N6,N6,N6-trimethyllysine (Lys5). Substrate-binding residues include Asn114 and Thr164. The Proton acceptor role is filled by Lys166. Position 168 (Lys168) interacts with substrate. Residues Lys192, Asp194, and Glu195 each contribute to the Mg(2+) site. Lys192 is subject to N6-carboxylysine. Residue His285 is the Proton acceptor of the active site. Substrate-binding residues include Arg286, His318, and Ser370.

This sequence belongs to the RuBisCO large chain family. Type I subfamily. As to quaternary structure, heterohexadecamer of 8 large chains and 8 small chains; disulfide-linked. The disulfide link is formed within the large subunit homodimers. The cofactor is Mg(2+). Post-translationally, the disulfide bond which can form in the large chain dimeric partners within the hexadecamer appears to be associated with oxidative stress and protein turnover.

It is found in the plastid. It localises to the chloroplast. It catalyses the reaction 2 (2R)-3-phosphoglycerate + 2 H(+) = D-ribulose 1,5-bisphosphate + CO2 + H2O. It carries out the reaction D-ribulose 1,5-bisphosphate + O2 = 2-phosphoglycolate + (2R)-3-phosphoglycerate + 2 H(+). Functionally, ruBisCO catalyzes two reactions: the carboxylation of D-ribulose 1,5-bisphosphate, the primary event in carbon dioxide fixation, as well as the oxidative fragmentation of the pentose substrate in the photorespiration process. Both reactions occur simultaneously and in competition at the same active site. In Bertiera breviflora, this protein is Ribulose bisphosphate carboxylase large chain.